A 253-amino-acid polypeptide reads, in one-letter code: DNA polymerase sliding clamp 2 (253 aa).

Belongs to the PCNA family. As to quaternary structure, homotrimer. The subunits circularize to form a toroid; DNA passes through its center. Replication factor C (RFC) is required to load the toroid on the DNA. Interacts with TIP.

Inhibited by interaction with the PCNA inhibitor TIP. Functionally, sliding clamp subunit that acts as a moving platform for DNA processing. Responsible for tethering the catalytic subunit of DNA polymerase and other proteins to DNA during high-speed replication. In Thermococcus kodakarensis (strain ATCC BAA-918 / JCM 12380 / KOD1) (Pyrococcus kodakaraensis (strain KOD1)), this protein is DNA polymerase sliding clamp 2.